Here is a 503-residue protein sequence, read N- to C-terminus: Probable cytosol aminopeptidase (503 aa).

Lys-270 and Asp-275 together coordinate Mn(2+). Lys-282 is an active-site residue. 3 residues coordinate Mn(2+): Asp-293, Asp-352, and Glu-354. Residue Arg-356 is part of the active site.

This sequence belongs to the peptidase M17 family. Mn(2+) serves as cofactor.

Its subcellular location is the cytoplasm. The catalysed reaction is Release of an N-terminal amino acid, Xaa-|-Yaa-, in which Xaa is preferably Leu, but may be other amino acids including Pro although not Arg or Lys, and Yaa may be Pro. Amino acid amides and methyl esters are also readily hydrolyzed, but rates on arylamides are exceedingly low.. It carries out the reaction Release of an N-terminal amino acid, preferentially leucine, but not glutamic or aspartic acids.. Functionally, presumably involved in the processing and regular turnover of intracellular proteins. Catalyzes the removal of unsubstituted N-terminal amino acids from various peptides. This chain is Probable cytosol aminopeptidase, found in Klebsiella pneumoniae subsp. pneumoniae (strain ATCC 700721 / MGH 78578).